A 398-amino-acid chain; its full sequence is Acetate kinase (398 aa).

A Mg(2+)-binding site is contributed by Asn-7. Lys-14 is a binding site for ATP. Residue Arg-92 coordinates substrate. The Proton donor/acceptor role is filled by Asp-149. Residues 209–213 (HLGNG), 284–286 (DFR), and 332–336 (GVGEN) contribute to the ATP site. Glu-385 is a binding site for Mg(2+).

It belongs to the acetokinase family. Homodimer. It depends on Mg(2+) as a cofactor. The cofactor is Mn(2+).

The protein localises to the cytoplasm. It carries out the reaction acetate + ATP = acetyl phosphate + ADP. It participates in metabolic intermediate biosynthesis; acetyl-CoA biosynthesis; acetyl-CoA from acetate: step 1/2. Its function is as follows. Catalyzes the formation of acetyl phosphate from acetate and ATP. Can also catalyze the reverse reaction. The protein is Acetate kinase of Clostridioides difficile (strain 630) (Peptoclostridium difficile).